The chain runs to 505 residues: MAERKVRVRFAPSPTGALHIGGVRTALYNYLFARQHGGDLIFRIEDTDSNRFVPGAEEYILESFKWLGIQFDEGVSFGGEYGPYRQSERREIYKKYVQVLLDNGKAYIAFDTPEELDAKRAEIANFQYDASTRVGMRNSLTLPKEEVEALIADGKQYVVRFKIEPNEDIHVNDLIRGEVVINSSILDDKVLYKSADELPTYHLANIVDDHLMEVSHVIRGEEWLPSAPLHVLLYRAFGWEDTMPAFAHLPLLLKPEGNGKLSKRDGDRLGFPVFPLEWHDPKSGEISSGYRESGYLPEAVINFLALLGWNPGNDQEVMSMDELIRLFDLHRCSKSGAKFDYKKGIWFNHTYIQQKSDKEIAELFVPVLKEHGVEAPFEKVVTVVGMMKDRVSFVKELWEVCSFFFVAPTEYDEKTVKKRWKEDSAKCMTELAEVLAGIEDFSIEGQEKIVMDWIAEKGYHTGNIMNAFRLTLVGEGKGPHMFDISWVLGKEETLARMKRAVEVLK.

Residues 12–22 carry the 'HIGH' region motif; sequence PSPTGALHIGG. The 'KMSKS' region motif lies at 260-264; that stretch reads KLSKR. Residue lysine 263 participates in ATP binding.

This sequence belongs to the class-I aminoacyl-tRNA synthetase family. Glutamate--tRNA ligase type 1 subfamily. Monomer.

Its subcellular location is the cytoplasm. The enzyme catalyses tRNA(Glu) + L-glutamate + ATP = L-glutamyl-tRNA(Glu) + AMP + diphosphate. Its function is as follows. Catalyzes the attachment of glutamate to tRNA(Glu) in a two-step reaction: glutamate is first activated by ATP to form Glu-AMP and then transferred to the acceptor end of tRNA(Glu). This is Glutamate--tRNA ligase from Bacteroides fragilis (strain ATCC 25285 / DSM 2151 / CCUG 4856 / JCM 11019 / LMG 10263 / NCTC 9343 / Onslow / VPI 2553 / EN-2).